The following is a 258-amino-acid chain: Global transcriptional regulator CodY (258 aa).

Residues 1 to 156 (MSSLLDKTRM…SATIIGLEIL (156 aa)) form a GAF domain region. The H-T-H motif DNA-binding region spans 204–223 (ASKIADKVGITRSVIVNALR).

The protein belongs to the CodY family.

Its subcellular location is the cytoplasm. DNA-binding global transcriptional regulator which is involved in the adaptive response to starvation and acts by directly or indirectly controlling the expression of numerous genes in response to nutrient availability. During rapid exponential growth, CodY is highly active and represses genes whose products allow adaptation to nutrient depletion. This is Global transcriptional regulator CodY from Clostridium botulinum (strain Okra / Type B1).